Consider the following 361-residue polypeptide: D-amino-acid oxidase (361 aa).

Positions 1–22 are cleaved as a signal peptide; it reads MSNTIVVVGAGVIGLTSALLLS. 8 residues coordinate FAD: alanine 10, isoleucine 13, lysine 34, histidine 35, alanine 45, serine 46, glycine 50, and asparagine 52. N-linked (GlcNAc...) asparagine glycans are attached at residues asparagine 193 and asparagine 222. 3 residues coordinate (R)-lactate: tyrosine 242, tyrosine 258, and arginine 305. Residues tyrosine 242, tyrosine 258, and arginine 305 each coordinate anthranilate. FAD-binding residues include arginine 305, serine 332, glycine 335, tyrosine 336, and glutamine 337. The Microbody targeting signal signature appears at 359–361; that stretch reads SKL.

Belongs to the DAMOX/DASOX family. The cofactor is FAD. Post-translationally, the N-terminus is blocked.

It localises to the peroxisome matrix. The enzyme catalyses a D-alpha-amino acid + O2 + H2O = a 2-oxocarboxylate + H2O2 + NH4(+). Functionally, catalyzes the oxidative deamination of D-amino acids with broad substrate specificity. Enables the organism to utilize D-amino acids as a source of nutrients. The sequence is that of D-amino-acid oxidase from Fusarium vanettenii (Neocosmospora pisi).